The following is a 316-amino-acid chain: 33 kDa chaperonin (316 aa).

Cystine bridges form between Cys-239–Cys-241 and Cys-272–Cys-275.

Belongs to the HSP33 family. Post-translationally, under oxidizing conditions two disulfide bonds are formed involving the reactive cysteines. Under reducing conditions zinc is bound to the reactive cysteines and the protein is inactive.

The protein resides in the cytoplasm. Its function is as follows. Redox regulated molecular chaperone. Protects both thermally unfolding and oxidatively damaged proteins from irreversible aggregation. Plays an important role in the bacterial defense system toward oxidative stress. This chain is 33 kDa chaperonin, found in Clostridium perfringens (strain SM101 / Type A).